A 526-amino-acid polypeptide reads, in one-letter code: Na(+)/H(+) antiporter NhaB (526 aa).

11 consecutive transmembrane segments (helical) span residues 14–34 (FLGYAPDWYKLTIFCFLLVNP), 63–83 (CYPLQPGGLLALQAMLIGMTS), 99–119 (MLLVFMVAGIYFMKQLLLFVF), 122–142 (LLLRIHSKALLSLAFCGAAAF), 146–166 (FLDALTVIAVVISVAIGFYGI), 206–226 (LLMHAGVGTALGGVMTMVGEP), 239–259 (FVSFFLHMSPVTVPVFICGIL), 307–327 (AVIGVWLIVALAFHLAEVGLI), 357–377 (FTALLTVFFAIVAVIIDQQLF), 451–471 (ATPNGQAAFLFLLTSSLAPLI), and 479–499 (VIMALPYTIVMTLVGLLCVEF).

It belongs to the NhaB Na(+)/H(+) (TC 2.A.34) antiporter family.

The protein localises to the cell inner membrane. The enzyme catalyses 2 Na(+)(in) + 3 H(+)(out) = 2 Na(+)(out) + 3 H(+)(in). Functionally, na(+)/H(+) antiporter that extrudes sodium in exchange for external protons. The polypeptide is Na(+)/H(+) antiporter NhaB (Pectobacterium carotovorum subsp. carotovorum (strain PC1)).